The sequence spans 408 residues: D-galactonate dehydratase family member OG2516_05608 (408 aa).

Mg(2+) is bound at residue Asp215. Residue His217 participates in D-arabinonate binding. Mg(2+) is bound by residues Glu241 and Glu267. Residues Glu267, Arg288, His317, and Glu344 each coordinate D-arabinonate.

The protein belongs to the mandelate racemase/muconate lactonizing enzyme family. GalD subfamily.

Has no detectable activity with D-mannonate and with a panel of 70 other acid sugars (in vitro), in spite of the conservation of the residues that are expected to be important for catalytic activity and cofactor binding. May have evolved a divergent function. In Oceanicola granulosus (strain ATCC BAA-861 / DSM 15982 / KCTC 12143 / HTCC2516), this protein is D-galactonate dehydratase family member OG2516_05608.